Reading from the N-terminus, the 422-residue chain is 26S proteasome non-ATPase regulatory subunit 11 (422 aa).

The 169-residue stretch at 224 to 392 (DWKTAYSYFY…GVLIIFDEPP (169 aa)) folds into the PCI domain.

Belongs to the proteasome subunit S9 family. As to quaternary structure, component of the 19S proteasome regulatory particle complex. The 26S proteasome consists of a 20S core particle (CP) and two 19S regulatory subunits (RP). The regulatory particle is made of a lid composed of 9 subunits including PSMD11, a base containing 6 ATPases and few additional components.

Its subcellular location is the nucleus. It is found in the cytoplasm. It localises to the cytosol. Its function is as follows. Component of the 26S proteasome, a multiprotein complex involved in the ATP-dependent degradation of ubiquitinated proteins. This complex plays a key role in the maintenance of protein homeostasis by removing misfolded or damaged proteins, which could impair cellular functions, and by removing proteins whose functions are no longer required. Therefore, the proteasome participates in numerous cellular processes, including cell cycle progression, apoptosis, or DNA damage repair. In the complex, PSMD11 is required for proteasome assembly. Plays a key role in increased proteasome activity in embryonic stem cells (ESCs): its high expression in ESCs promotes enhanced assembly of the 26S proteasome, followed by higher proteasome activity. The protein is 26S proteasome non-ATPase regulatory subunit 11 (psmd11) of Xenopus tropicalis (Western clawed frog).